Here is a 275-residue protein sequence, read N- to C-terminus: Protein COFACTOR ASSEMBLY OF COMPLEX C SUBUNIT B CCB2, chloroplastic (275 aa).

Residues 1–19 (MSIQICNFPFHPKFALQPR) constitute a chloroplast transit peptide. The Stromal segment spans residues 20–65 (AQRSTRIFARTENDSPQSKTSDQQLNLSVLRFTFGIPGFDESYLPR). Residues 66-86 (WIGYGFGSLLLLNHFSASAPI) form a helical membrane-spanning segment. The Lumenal segment spans residues 87–93 (SESQMRS). Residues 94 to 114 (EALGLSLAAFSIALPYIGKFL) form a helical membrane-spanning segment. Residues 115-275 (KGSVVEQRSL…IGAMAEKFRG (161 aa)) lie on the Stromal side of the membrane.

Its subcellular location is the plastid. It localises to the chloroplast thylakoid membrane. Its function is as follows. Required for the biogenesis and accumulation of native cytochrome b6 in the thylakoid membrane. Controls the conversion of apocytochrome b6 to holocytochrome b6. Required for covalent binding of the c-type heme to cytochrome b6. The sequence is that of Protein COFACTOR ASSEMBLY OF COMPLEX C SUBUNIT B CCB2, chloroplastic from Arabidopsis thaliana (Mouse-ear cress).